A 158-amino-acid chain; its full sequence is Ribosome maturation factor RimP (158 aa).

This sequence belongs to the RimP family.

It is found in the cytoplasm. In terms of biological role, required for maturation of 30S ribosomal subunits. This chain is Ribosome maturation factor RimP, found in Deinococcus radiodurans (strain ATCC 13939 / DSM 20539 / JCM 16871 / CCUG 27074 / LMG 4051 / NBRC 15346 / NCIMB 9279 / VKM B-1422 / R1).